Consider the following 375-residue polypeptide: Response regulator aspartate phosphatase E (375 aa).

Residues 24 to 95 (NVTDAEMLKA…HKKKLDNMRA (72 aa)) are a coiled coil. TPR repeat units follow at residues 96–129 (YYYN…IPTI), 177–210 (IQCH…AELL), 219–252 (ATAF…YRKI), 258–291 (PQAY…AVDF), 297–330 (MNLF…KGYP), and 333–366 (EELA…QKQI).

This sequence belongs to the Rap family.

It localises to the cytoplasm. Phosphatase activity is inhibited by the phosphatase regulator PhrE. Functionally, involved in the regulation of sporulation. Acts as a phosphatase that specifically dephosphorylates the sporulation initiation phosphotransferase Spo0F and inhibits its activity. Probably plays a dispensable role in the overall context of sporulation initiation. In Bacillus subtilis (strain 168), this protein is Response regulator aspartate phosphatase E (rapE).